Here is a 397-residue protein sequence, read N- to C-terminus: Riboflavin biosynthesis protein RibBA (397 aa).

The interval 1-199 (MFHRIEEALE…IEDLIAYRRH (199 aa)) is DHBP synthase. Residues 26–27 (RE), D31, 138–142 (RAGHT), and E162 contribute to the D-ribulose 5-phosphate site. E27 serves as a coordination point for Mg(2+). Residue H141 participates in Mg(2+) binding. The GTP cyclohydrolase II stretch occupies residues 200–397 (HETLVTREVE…VNKLGHLLNL (198 aa)). Residue 250–254 (RVHSE) coordinates GTP. Zn(2+) is bound by residues C255, C266, and C268. GTP is bound by residues Q271, 293–295 (EGR), and T315. D327 functions as the Proton acceptor; for GTP cyclohydrolase activity in the catalytic mechanism. R329 acts as the Nucleophile; for GTP cyclohydrolase activity in catalysis. T350 and K355 together coordinate GTP.

In the N-terminal section; belongs to the DHBP synthase family. The protein in the C-terminal section; belongs to the GTP cyclohydrolase II family. It depends on Mg(2+) as a cofactor. Requires Mn(2+) as cofactor. Zn(2+) serves as cofactor.

The catalysed reaction is D-ribulose 5-phosphate = (2S)-2-hydroxy-3-oxobutyl phosphate + formate + H(+). It carries out the reaction GTP + 4 H2O = 2,5-diamino-6-hydroxy-4-(5-phosphoribosylamino)-pyrimidine + formate + 2 phosphate + 3 H(+). It functions in the pathway cofactor biosynthesis; riboflavin biosynthesis; 2-hydroxy-3-oxobutyl phosphate from D-ribulose 5-phosphate: step 1/1. Its pathway is cofactor biosynthesis; riboflavin biosynthesis; 5-amino-6-(D-ribitylamino)uracil from GTP: step 1/4. In terms of biological role, catalyzes the conversion of D-ribulose 5-phosphate to formate and 3,4-dihydroxy-2-butanone 4-phosphate. Functionally, catalyzes the conversion of GTP to 2,5-diamino-6-ribosylamino-4(3H)-pyrimidinone 5'-phosphate (DARP), formate and pyrophosphate. This chain is Riboflavin biosynthesis protein RibBA, found in Bacillus cereus (strain G9842).